The sequence spans 541 residues: Chaperonin GroEL 2 (541 aa).

Residues threonine 29–proline 32, aspartate 86–threonine 90, glycine 413, asparagine 476–alanine 478, and aspartate 492 each bind ATP.

This sequence belongs to the chaperonin (HSP60) family. Forms a cylinder of 14 subunits composed of two heptameric rings stacked back-to-back. Interacts with the co-chaperonin GroES.

The protein localises to the cytoplasm. The enzyme catalyses ATP + H2O + a folded polypeptide = ADP + phosphate + an unfolded polypeptide.. In terms of biological role, together with its co-chaperonin GroES, plays an essential role in assisting protein folding. The GroEL-GroES system forms a nano-cage that allows encapsulation of the non-native substrate proteins and provides a physical environment optimized to promote and accelerate protein folding. This Streptomyces coelicolor (strain ATCC BAA-471 / A3(2) / M145) protein is Chaperonin GroEL 2.